The following is a 202-amino-acid chain: Guanylate kinase (202 aa).

A Guanylate kinase-like domain is found at 3–181 (GNLFIITAPS…ALEDLRAIIR (179 aa)). 10-17 (APSGAGKT) contacts ATP.

This sequence belongs to the guanylate kinase family.

Its subcellular location is the cytoplasm. The enzyme catalyses GMP + ATP = GDP + ADP. Essential for recycling GMP and indirectly, cGMP. This Methylobacillus flagellatus (strain ATCC 51484 / DSM 6875 / VKM B-1610 / KT) protein is Guanylate kinase.